Consider the following 132-residue polypeptide: MVMTDPIADLLTRIRNANVVRHEVVEVPSSTIKKAVLNIMLQEGYIKNLEEYADGSVNMIRLSMKYGKNKERVITGLKRISKPGLRVYCRKEEIPKVLNGLGVAIISTSKGIVTDREARKLGVGGEVLCYIW.

It belongs to the universal ribosomal protein uS8 family. In terms of assembly, part of the 30S ribosomal subunit. Contacts proteins S5 and S12.

In terms of biological role, one of the primary rRNA binding proteins, it binds directly to 16S rRNA central domain where it helps coordinate assembly of the platform of the 30S subunit. The sequence is that of Small ribosomal subunit protein uS8 from Clostridium kluyveri (strain NBRC 12016).